Consider the following 238-residue polypeptide: Large ribosomal subunit protein uL3 (238 aa).

Glutamine 157 carries the N5-methylglutamine modification.

The protein belongs to the universal ribosomal protein uL3 family. Part of the 50S ribosomal subunit. Forms a cluster with proteins L14 and L19. In terms of processing, methylated by PrmB.

In terms of biological role, one of the primary rRNA binding proteins, it binds directly near the 3'-end of the 23S rRNA, where it nucleates assembly of the 50S subunit. This is Large ribosomal subunit protein uL3 from Ruthia magnifica subsp. Calyptogena magnifica.